Reading from the N-terminus, the 234-residue chain is Phosphoglycolate phosphatase (234 aa).

Asp13 serves as the catalytic Nucleophile. Asp13, Asp15, and Asp175 together coordinate Mg(2+).

This sequence belongs to the HAD-like hydrolase superfamily. CbbY/CbbZ/Gph/YieH family. As to quaternary structure, monomer. Mg(2+) is required as a cofactor. The cofactor is chloride.

The enzyme catalyses 2-phosphoglycolate + H2O = glycolate + phosphate. Its pathway is organic acid metabolism; glycolate biosynthesis; glycolate from 2-phosphoglycolate: step 1/1. Specifically catalyzes the dephosphorylation of 2-phosphoglycolate. Is involved in the dissimilation of the intracellular 2-phosphoglycolate formed during the DNA repair of 3'-phosphoglycolate ends, a major class of DNA lesions induced by oxidative stress. This chain is Phosphoglycolate phosphatase, found in Pectobacterium atrosepticum (strain SCRI 1043 / ATCC BAA-672) (Erwinia carotovora subsp. atroseptica).